The sequence spans 85 residues: Putative defensin-like protein 79 (85 aa).

Residues methionine 1 to serine 31 form the signal peptide. Intrachain disulfides connect cysteine 37-cysteine 69, cysteine 44-cysteine 60, cysteine 47-cysteine 67, and cysteine 51-cysteine 68.

The protein belongs to the DEFL family.

The protein localises to the secreted. The polypeptide is Putative defensin-like protein 79 (Arabidopsis thaliana (Mouse-ear cress)).